Reading from the N-terminus, the 218-residue chain is Small ribosomal subunit protein uS3c (218 aa).

The KH type-2 domain maps to 47–118 (VYKNIRNSSN…KLRMTLTEVT (72 aa)).

Belongs to the universal ribosomal protein uS3 family. As to quaternary structure, part of the 30S ribosomal subunit.

The protein localises to the plastid. Its subcellular location is the chloroplast. The chain is Small ribosomal subunit protein uS3c (rps3) from Physcomitrium patens (Spreading-leaved earth moss).